The chain runs to 435 residues: Nuclear hormone receptor family member nhr-136 (435 aa).

Residues 50 to 129 (PSNCKVCRHS…AGMNPSAIQA (80 aa)) constitute a DNA-binding region (nuclear receptor). 2 NR C4-type zinc fingers span residues 53–73 (CKVCRHSATGYHYDVPSCNGC) and 89–112 (CLKMRKCLSGTEPVDLSRRMCRAC). Residues 194–430 (RDIRKLDELI…RYTRISNLYE (237 aa)) form the NR LBD domain.

It belongs to the nuclear hormone receptor family.

It localises to the nucleus. Its function is as follows. Orphan nuclear receptor. In Caenorhabditis elegans, this protein is Nuclear hormone receptor family member nhr-136 (nhr-136).